The chain runs to 103 residues: Histone H4 (103 aa).

Residues 1–14 (MTGRGKGGKGLGKG) are compositionally biased toward gly residues. Residues 1–20 (MTGRGKGGKGLGKGGAKRHR) form a disordered region. N6-acetyl-N6-methyllysine; alternate is present on K6. 3 positions are modified to N6-methyllysine; alternate: K6, K9, and K13. An N6-acetyl-N6-methyllysine; alternate modification is found at K13. A DNA-binding region spans residues 17-21 (KRHRK). An N6-glutaryllysine modification is found at K92.

This sequence belongs to the histone H4 family. In terms of assembly, the nucleosome is a histone octamer containing two molecules each of H2A, H2B, H3 and H4 assembled in one H3-H4 heterotetramer and two H2A-H2B heterodimers. The octamer wraps approximately 147 bp of DNA. In terms of processing, glutarylation at Lys-92 (H4K91glu) destabilizes nucleosomes by promoting dissociation of the H2A-H2B dimers from nucleosomes.

The protein resides in the nucleus. Its subcellular location is the chromosome. Its function is as follows. Core component of nucleosome. Nucleosomes wrap and compact DNA into chromatin, limiting DNA accessibility to the cellular machineries which require DNA as a template. Histones thereby play a central role in transcription regulation, DNA repair, DNA replication and chromosomal stability. DNA accessibility is regulated via a complex set of post-translational modifications of histones, also called histone code, and nucleosome remodeling. The sequence is that of Histone H4 (hH4-1) from Neurospora crassa (strain ATCC 24698 / 74-OR23-1A / CBS 708.71 / DSM 1257 / FGSC 987).